The sequence spans 91 residues: Large ribosomal subunit protein bL27 (91 aa).

Belongs to the bacterial ribosomal protein bL27 family.

This Deinococcus deserti (strain DSM 17065 / CIP 109153 / LMG 22923 / VCD115) protein is Large ribosomal subunit protein bL27.